The chain runs to 201 residues: 8-oxoguanine DNA glycosylase/AP lyase (201 aa).

Catalysis depends on residues Lys126 and Asp144.

This sequence belongs to the type-2 OGG1 family.

The enzyme catalyses 2'-deoxyribonucleotide-(2'-deoxyribose 5'-phosphate)-2'-deoxyribonucleotide-DNA = a 3'-end 2'-deoxyribonucleotide-(2,3-dehydro-2,3-deoxyribose 5'-phosphate)-DNA + a 5'-end 5'-phospho-2'-deoxyribonucleoside-DNA + H(+). In terms of biological role, catalyzes the excision of an oxidatively damaged form of guanine (7,8-dihydro-8-oxoguanine = 8-oxoG) from DNA. Also cleaves the DNA backbone at apurinic/apyrimidinic sites (AP sites). The sequence is that of 8-oxoguanine DNA glycosylase/AP lyase from Metallosphaera sedula (strain ATCC 51363 / DSM 5348 / JCM 9185 / NBRC 15509 / TH2).